The sequence spans 79 residues: Short neurotoxin 3 (79 aa).

An N-terminal signal peptide occupies residues 1–21; sequence MKTLLLTLVMVTIMCLDLGYT. Disulfide bonds link C24–C41, C34–C59, C63–C71, and C72–C77.

This sequence belongs to the three-finger toxin family. Short-chain subfamily. Type III alpha-neurotoxin sub-subfamily. In terms of tissue distribution, expressed by the venom gland.

The protein resides in the secreted. Functionally, binds with high affinity to muscle nicotinic acetylcholine receptor (nAChR) and hinders acetylcholine binding to the receptor, thereby impairing neuromuscular transmission. Competes with the binding of alpha-bungarotoxin on muscle AChR (from Torpedo) with an IC(50) of 0.30 uM. Causes muscle paralysis, spasms and increased respiration. This is Short neurotoxin 3 from Pseudonaja textilis (Eastern brown snake).